The following is a 338-amino-acid chain: HLA class I histocompatibility antigen, alpha chain G (338 aa).

Residues 1 to 24 (MVVMAPRTLFLLLSGALTLTETWA) form the signal peptide. Residues 3 to 11 (VMAPRTLFL) form a VL9 epitope region. The interval 25 to 114 (GSHSMRYFSA…LRGYYNQSEA (90 aa)) is alpha-1. At 25 to 308 (GSHSMRYFSA…KQSSLPTIPI (284 aa)) the chain is on the extracellular side. Y31, H94, N101, and Y108 together coordinate a peptide antigen. Residue N110 is glycosylated (N-linked (GlcNAc...) asparagine). Positions 115 to 206 (SSHTLQWMIG…ENGKEMLQRA (92 aa)) are alpha-2. Residues C125 and C188 are joined by a disulfide bond. A peptide antigen is bound by residues S167, K170, Q179, R180, Y183, and Y195. Residues 207 to 298 (DPPKTHVTHH…GLPEPLMLRW (92 aa)) are alpha-3. The 91-residue stretch at 209 to 299 (PKTHVTHHPV…LPEPLMLRWK (91 aa)) folds into the Ig-like C1-type domain. C227 and C283 form a disulfide bridge. The segment at 299-308 (KQSSLPTIPI) is connecting peptide. Residues 309–332 (MGIVAGLVVLAAVVTGAAVAAVLW) traverse the membrane as a helical segment. At 333 to 338 (RKKSSD) the chain is on the cytoplasmic side. An ER-retrieval signal motif is present at residues 334–336 (KKS).

Belongs to the MHC class I family. As to quaternary structure, forms a heterotrimer with B2M and a self-peptide (peptide-bound HLA-G-B2M). HLA-G-B2M complex interacts with components of the antigen processing machinery TAPBP and TAP1-TAP2 complex; this interaction is required for loading of high affinity peptides and heterotrimer translocation to the cell surface. Interacts with CALCR; this interaction is required for appropriate folding. Interacts with COPB1; this interaction mediates the endoplasmic reticulum (ER) retrieval of HLA-G-B2M complexes that bind low affinity peptides. On the cell surface, peptide-bound HLA-G-B2M molecules (referred to as monomers) can form disulfide-linked homomultimers, homodimers and homotrimers. Interacts with KIR2DL4; this interaction is direct. Interacts with LILRB1 and LILRB2 receptors; this interaction is direct. Interacts with CD160; this interactions is direct. Interacts with CD8A homodimer; this interaction is direct and might down-regulate T cell receptor signaling. Isoform 2: Forms a non-disulfide-linked homodimer and interacts with LILRB2. Post-translationally, N-glycosylated. In terms of processing, produced by proteolytic cleavage at the cell surface (shedding) by matrix metalloproteinase MMP2. In terms of tissue distribution, expressed in adult eye. Expressed in immune cell subsets including monocytes, myeloid and plasmacytoid dendritic cells and regulatory T cells (Tr1)(at protein level). Secreted by follicular dendritic cell and follicular helper T cells. As to expression, detected in physiological fluids including amniotic fluid and serum. Expressed in placenta, amniotic membrane, skin, cord blood and peripheral blood mononuclear cells.

The protein localises to the cell membrane. The protein resides in the endoplasmic reticulum membrane. It localises to the early endosome membrane. Its subcellular location is the secreted. It is found in the early endosome. The protein localises to the cell projection. The protein resides in the filopodium membrane. Its function is as follows. Non-classical major histocompatibility class Ib molecule involved in immune regulatory processes at the maternal-fetal interface. In complex with B2M/beta-2 microglobulin binds a limited repertoire of nonamer self-peptides derived from intracellular proteins including histones and ribosomal proteins. Peptide-bound HLA-G-B2M complex acts as a ligand for inhibitory/activating KIR2DL4, LILRB1 and LILRB2 receptors on uterine immune cells to promote fetal development while maintaining maternal-fetal tolerance. Upon interaction with KIR2DL4 and LILRB1 receptors on decidual NK cells, it triggers NK cell senescence-associated secretory phenotype as a molecular switch to promote vascular remodeling and fetal growth in early pregnancy. Through interaction with KIR2DL4 receptor on decidual macrophages induces pro-inflammatory cytokine production mainly associated with tissue remodeling. Through interaction with LILRB2 receptor triggers differentiation of type 1 regulatory T cells and myeloid-derived suppressor cells, both of which actively maintain maternal-fetal tolerance. May play a role in balancing tolerance and antiviral-immunity at maternal-fetal interface by keeping in check the effector functions of NK, CD8+ T cells and B cells. Reprograms B cells toward an immune suppressive phenotype via LILRB1. May induce immune activation/suppression via intercellular membrane transfer (trogocytosis), likely enabling interaction with KIR2DL4, which resides mostly in endosomes. Through interaction with the inhibitory receptor CD160 on endothelial cells may control angiogenesis in immune privileged sites. Likely does not bind B2M and presents peptides. Negatively regulates NK cell- and CD8+ T cell-mediated cytotoxicity. In terms of biological role, non-classical major histocompatibility class Ib molecule involved in immune regulatory processes at the maternal-fetal interface. In complex with B2M/beta-2 microglobulin binds a limited repertoire of nonamer self-peptides derived from intracellular proteins including histones and ribosomal proteins. Peptide-bound HLA-G-B2M complex acts as a ligand for inhibitory/activating KIR2DL4, LILRB1 and LILRB2 receptors on uterine immune cells to promote fetal development while maintaining maternal-fetal tolerance. Upon interaction with KIR2DL4 and LILRB1 receptors on decidual NK cells, it triggers NK cell senescence-associated secretory phenotype as a molecular switch to promote vascular remodeling and fetal growth in early pregnancy. Through interaction with KIR2DL4 receptor on decidual macrophages induces pro-inflammatory cytokine production mainly associated with tissue remodeling. Through interaction with LILRB2 receptor triggers differentiation of type 1 regulatory T cells and myeloid-derived suppressor cells, both of which actively maintain maternal-fetal tolerance. Reprograms B cells toward an immune suppressive phenotype via LILRB1. Functionally, likely does not bind B2M and presents peptides. This Homo sapiens (Human) protein is HLA class I histocompatibility antigen, alpha chain G.